The following is a 512-amino-acid chain: ATP synthase subunit alpha (512 aa).

ATP is bound at residue Gly169–Thr176.

Belongs to the ATPase alpha/beta chains family. In terms of assembly, F-type ATPases have 2 components, CF(1) - the catalytic core - and CF(0) - the membrane proton channel. CF(1) has five subunits: alpha(3), beta(3), gamma(1), delta(1), epsilon(1). CF(0) has three main subunits: a(1), b(2) and c(9-12). The alpha and beta chains form an alternating ring which encloses part of the gamma chain. CF(1) is attached to CF(0) by a central stalk formed by the gamma and epsilon chains, while a peripheral stalk is formed by the delta and b chains.

It is found in the cell inner membrane. It catalyses the reaction ATP + H2O + 4 H(+)(in) = ADP + phosphate + 5 H(+)(out). Produces ATP from ADP in the presence of a proton gradient across the membrane. The alpha chain is a regulatory subunit. This is ATP synthase subunit alpha from Dechloromonas aromatica (strain RCB).